The chain runs to 1200 residues: Chromosome partition protein Smc (1200 aa).

Pro33 to Asn40 is an ATP binding site. A disordered region spans residues Gly90–Ile109. Residues Glu202–Gln528 are a coiled coil. The 115-residue stretch at Pro542–Asn656 folds into the SMC hinge domain. Residues Thr692 to Glu1046 adopt a coiled-coil conformation.

The protein belongs to the SMC family. In terms of assembly, homodimer.

It localises to the cytoplasm. In terms of biological role, required for chromosome condensation and partitioning. In Synechocystis sp. (strain ATCC 27184 / PCC 6803 / Kazusa), this protein is Chromosome partition protein Smc.